The sequence spans 190 residues: Elongation factor P-like protein (190 aa).

This sequence belongs to the elongation factor P family.

The sequence is that of Elongation factor P-like protein from Erwinia tasmaniensis (strain DSM 17950 / CFBP 7177 / CIP 109463 / NCPPB 4357 / Et1/99).